A 117-amino-acid polypeptide reads, in one-letter code: Nuclear transition protein 2 (117 aa).

Residues 1 to 117 (MDTKMQSLPT…KRRSSGRRYK (117 aa)) are disordered. A compositionally biased stretch (low complexity) spans 7-26 (SLPTTHPHPHSSSRPQSHTS). 8 residues coordinate Zn(2+): H12, H14, H16, H24, C32, C34, C38, and C41. Residues 44–53 (AGHAGSSSSP) are compositionally biased toward low complexity. Basic residues-rich tracts occupy residues 60-77 (KHPK…RPSH) and 93-117 (SKRK…RRYK). A Nuclear localization signal motif is present at residues 90 to 98 (GKVSKRKAV). Position 112 is a phosphoserine (S112).

It belongs to the nuclear transition protein 2 family.

The protein localises to the nucleus. It localises to the chromosome. Plays a key role in the replacement of histones to protamine in the elongating spermatids of mammals. In condensing spermatids, loaded onto the nucleosomes, where it promotes the recruitment and processing of protamines, which are responsible for histone eviction. The histone H2AB1-H2BC1/TH2B dimer is required for loading of TNP2 onto chromatin. The protein is Nuclear transition protein 2 of Mus musculus (Mouse).